We begin with the raw amino-acid sequence, 27 residues long: Vasotocin-neurophysin VT (27 aa).

C1 and C6 are joined by a disulfide. A Glycine amide modification is found at G9.

This sequence belongs to the vasopressin/oxytocin family.

Its function is as follows. Vasotocin is an antidiuretic hormone. This Sclerophrys regularis (Common African toad) protein is Vasotocin-neurophysin VT.